We begin with the raw amino-acid sequence, 159 residues long: MQSTQDYIEMRLPASAEYVSLIRLTLSGVFSRAGASYDDIEDSKIAVSEAVTNAVKHAYKKNSEIGMINLCFEIFDDRIKIVISDQGESFDYEATKSHLGPYNDNENIDFLREGGLGLFLIESLMDEVTVYKESGVTISMIKYIKKEQVRNNGERVEIS.

Belongs to the anti-sigma-factor family.

The enzyme catalyses L-seryl-[protein] + ATP = O-phospho-L-seryl-[protein] + ADP + H(+). It catalyses the reaction L-threonyl-[protein] + ATP = O-phospho-L-threonyl-[protein] + ADP + H(+). Negative regulator of sigma-B activity. Phosphorylates and inactivates its specific antagonist protein, RsbV. Upon phosphorylation of RsbV, RsbW is released and binds to sigma-B, thereby blocking its ability to form an RNA polymerase holoenzyme (E-sigma-B). The sequence is that of Serine-protein kinase RsbW from Staphylococcus epidermidis.